A 1166-amino-acid polypeptide reads, in one-letter code: UDP-N-acetylglucosamine transferase subunit ALG13 (1166 aa).

The tract at residues 1–125 is glycosyltransferase activity; the sequence is MKRAFVTVGT…LHKEGHLFYC (125 aa). The interval 126–394 is deubiquitinase activity; it reads TCRVLSCPAP…GSRRNKHHAL (269 aa). Residues 225–346 form the OTU domain; that stretch reads LFRKVVAKDA…NGHYDSVYSK (122 aa). Asp233 functions as the For deubiquitinase activity in the catalytic mechanism. Cys236 functions as the Nucleophile; for deubiquitinase activity in the catalytic mechanism. The For deubiquitinase activity role is filled by His339. Residues 393 to 438 form a disordered region; that stretch reads ALTASVEGSSDQKSSTEDRTEEAAACSSAASTPEGNKQGTERQKVP. Residues 486–546 enclose the Tudor domain; the sequence is YYFLGDKCQV…RPVNQVALLP (61 aa). Composition is skewed to pro residues over residues 921-930, 941-957, and 1004-1034; these read PPPLPPPPPA, PLPPPPPPPPPPPPPYS, and QPQPQPQPQPQPQPQPQPQPQQPQQQQPPPQ. 2 disordered regions span residues 921-966 and 998-1056; these read PPPL…SDLP and QQQL…EQPL.

It belongs to the glycosyltransferase 28 family. Forms with ALG14 the active heterodimeric UDP-N-acetylglucosamine transferase complex. In terms of assembly, not able to interact with ALG14 to form an active UDP-N-acetylglucosamine transferase complex.

It is found in the endoplasmic reticulum membrane. The catalysed reaction is an N-acetyl-alpha-D-glucosaminyl-diphospho-di-trans,poly-cis-dolichol + UDP-N-acetyl-alpha-D-glucosamine = an N,N'-diacetylchitobiosyl-diphospho-di-trans,poly-cis-dolichol + UDP + H(+). Its pathway is protein modification; protein glycosylation. In terms of biological role, catalytic subunit of the UDP-N-acetylglucosamine transferase complex that operates in the biosynthetic pathway of dolichol-linked oligosaccharides, the glycan precursors employed in protein asparagine (N)-glycosylation. The assembly of dolichol-linked oligosaccharides begins on the cytosolic side of the endoplasmic reticulum membrane and finishes in its lumen. The sequential addition of sugars to dolichol pyrophosphate produces dolichol-linked oligosaccharides containing fourteen sugars, including two GlcNAcs, nine mannoses and three glucoses. Once assembled, the oligosaccharide is transferred from the lipid to nascent proteins by oligosaccharyltransferases. On the cytoplasmic face of the endoplasmic reticulum, the dimeric ALG13/ALG14 complex catalyzes the second step of dolichol pyrophosphate biosynthesis, transferring a beta1,4-linked N-acetylglucosamine (GlcNAc) from UDP-GlcNAc to GlcNAc-pyrophosphatedolichol (Gn-PDol) to produce N,N'-diacetylchitobiosyl diphosphodolichol. N,N'-diacetylchitobiosyl diphosphodolichol is a substrate for ALG1, the following enzyme in the biosynthetic pathway. No glycosyltransferase or deubiquitinase activity is detected for this potential multifunctional enzyme. This is UDP-N-acetylglucosamine transferase subunit ALG13 from Mus musculus (Mouse).